Reading from the N-terminus, the 228-residue chain is Probable methylthioribulose-1-phosphate dehydratase (228 aa).

A substrate-binding site is contributed by Cys-87. Residues His-105 and His-107 each coordinate Zn(2+). Glu-129 functions as the Proton donor/acceptor in the catalytic mechanism. His-185 is a Zn(2+) binding site.

The protein belongs to the aldolase class II family. MtnB subfamily. It depends on Zn(2+) as a cofactor.

It is found in the cytoplasm. It carries out the reaction 5-(methylsulfanyl)-D-ribulose 1-phosphate = 5-methylsulfanyl-2,3-dioxopentyl phosphate + H2O. Its pathway is amino-acid biosynthesis; L-methionine biosynthesis via salvage pathway; L-methionine from S-methyl-5-thio-alpha-D-ribose 1-phosphate: step 2/6. Its function is as follows. Catalyzes the dehydration of methylthioribulose-1-phosphate (MTRu-1-P) into 2,3-diketo-5-methylthiopentyl-1-phosphate (DK-MTP-1-P). The chain is Probable methylthioribulose-1-phosphate dehydratase from Drosophila willistoni (Fruit fly).